Reading from the N-terminus, the 165-residue chain is Nucleotide-binding protein Ctha_0558 (165 aa).

The protein belongs to the YajQ family.

Its function is as follows. Nucleotide-binding protein. The protein is Nucleotide-binding protein Ctha_0558 of Chloroherpeton thalassium (strain ATCC 35110 / GB-78).